Consider the following 185-residue polypeptide: Dual specificity protein phosphatase 3 (185 aa).

Residues 28 to 179 (QPCNEVTPRI…LCQLNDRLAK (152 aa)) enclose the Tyrosine-protein phosphatase domain. Cys-124 serves as the catalytic Phosphocysteine intermediate.

The protein belongs to the protein-tyrosine phosphatase family. Non-receptor class dual specificity subfamily. In terms of assembly, microtubule inner protein component of sperm flagellar doublet microtubules. Interacts with VRK3; this interaction activates DUSP3 phosphatase activity.

The protein resides in the nucleus. The protein localises to the cytoplasm. It is found in the cytoskeleton. Its subcellular location is the flagellum axoneme. The enzyme catalyses O-phospho-L-tyrosyl-[protein] + H2O = L-tyrosyl-[protein] + phosphate. It carries out the reaction O-phospho-L-seryl-[protein] + H2O = L-seryl-[protein] + phosphate. It catalyses the reaction O-phospho-L-threonyl-[protein] + H2O = L-threonyl-[protein] + phosphate. Functionally, shows activity both for tyrosine-protein phosphate and serine-protein phosphate, but displays a strong preference toward phosphotyrosines. Specifically dephosphorylates and inactivates ERK1 and ERK2. The chain is Dual specificity protein phosphatase 3 (DUSP3) from Homo sapiens (Human).